A 472-amino-acid chain; its full sequence is UDP-glucuronosyltransferase (472 aa).

3 N-linked (GlcNAc...) asparagine glycosylation sites follow: Asn59, Asn227, and Asn377. A helical membrane pass occupies residues 436-456; sequence FGFILLILLTVLWVTLKCCLF.

It belongs to the UDP-glycosyltransferase family.

It localises to the microsome membrane. It is found in the endoplasmic reticulum membrane. The catalysed reaction is glucuronate acceptor + UDP-alpha-D-glucuronate = acceptor beta-D-glucuronoside + UDP + H(+). In terms of biological role, UDPGT is of major importance in the conjugation and subsequent elimination of potentially toxic xenobiotics and endogenous compounds. This chain is UDP-glucuronosyltransferase (ugt3), found in Pleuronectes platessa (European plaice).